Consider the following 219-residue polypeptide: 2-C-methyl-D-erythritol 4-phosphate cytidylyltransferase (219 aa).

It belongs to the IspD/TarI cytidylyltransferase family. IspD subfamily.

It catalyses the reaction 2-C-methyl-D-erythritol 4-phosphate + CTP + H(+) = 4-CDP-2-C-methyl-D-erythritol + diphosphate. It functions in the pathway isoprenoid biosynthesis; isopentenyl diphosphate biosynthesis via DXP pathway; isopentenyl diphosphate from 1-deoxy-D-xylulose 5-phosphate: step 2/6. Catalyzes the formation of 4-diphosphocytidyl-2-C-methyl-D-erythritol from CTP and 2-C-methyl-D-erythritol 4-phosphate (MEP). This chain is 2-C-methyl-D-erythritol 4-phosphate cytidylyltransferase, found in Endomicrobium trichonymphae.